A 264-amino-acid chain; its full sequence is Regulatory protein RecX (264 aa).

Belongs to the RecX family.

It is found in the cytoplasm. Negatively modulates RecA activity. The chain is Regulatory protein RecX from Bacillus subtilis (strain 168).